The following is a 252-amino-acid chain: GPI alpha-1,4-mannosyltransferase I, stabilizing subunit (252 aa).

A signal peptide spans 1–22 (MAASALAWLLLWAAGLVGRLAA). 2 N-linked (GlcNAc...) asparagine glycosylation sites follow: asparagine 97 and asparagine 209. Residues 225 to 245 (VCSVTLLITVLCSTLILLAVF) form a helical membrane-spanning segment.

The protein belongs to the PIGX family. As to quaternary structure, part of the glycosylphosphatidylinositol-mannosyltransferase I complex that is composed of PIGM and PIGX. Interacts with PIGM; PIGX stabilizes PIGM.

The protein localises to the endoplasmic reticulum membrane. The protein operates within glycolipid biosynthesis; glycosylphosphatidylinositol-anchor biosynthesis. Functionally, stabilizing subunit of the glycosylphosphatidylinositol-mannosyltransferase I complex which catalyzes the transfer of the first mannose, via an alpha-1,4 bond from a dolichol-phosphate-mannose (Dol-P-Man) to the glucosaminyl acyl phosphatidylinositol (GlcN-(acyl)PI) intermediate to generate alpha-D-Man-(1-&gt;4)-alpha-D-GlcN-(1-&gt;6)-(1-radyl,2-acyl-sn-glycero-3-phospho)-2-acyl-inositol and participates in the sixth step of the glycosylphosphatidylinositol-anchor biosynthesis. Probably acts by stabilizing the mannosyltransferase PIGM. This is GPI alpha-1,4-mannosyltransferase I, stabilizing subunit from Rattus norvegicus (Rat).